Reading from the N-terminus, the 952-residue chain is Eukaryotic initiation factor 4F subunit p150 (952 aa).

Disordered regions lie at residues 1 to 77, 115 to 389, and 481 to 575; these read MTDE…NYNG, GSAP…DAGT, and VIPP…LVPS. Residues 7-16 are compositionally biased toward polar residues; it reads HPTQSASKQE. Residues 29 to 46 are compositionally biased toward low complexity; that stretch reads ESQQQRGYTNYNNGSNYT. Residues 47-56 show a composition bias toward polar residues; it reads QKKPYNSNRP. Residues 65-74 show a composition bias toward low complexity; it reads GPNRYNNRGN. Residues 140–151 are compositionally biased toward basic and acidic residues; sequence SGEHLDLKEQHK. The segment covering 154-166 has biased composition (polar residues); the sequence is LQSQERSTVSPQP. Residue serine 163 is modified to Phosphoserine. The span at 175 to 191 shows a compositional bias: low complexity; the sequence is DSTSTSTPTPTPSTNDS. Threonine 181 is modified (phosphothreonine). Residues 188 to 299 are interaction with PAB1; sequence TNDSKASSEE…KEESTPKVLT (112 aa). Serine 195 carries the phosphoserine modification. Over residues 218–228 the composition is skewed to basic and acidic residues; the sequence is AALEKKRKEQL. Positions 229-244 are enriched in polar residues; that stretch reads EGSSGNNNIPMKTTPE. Composition is skewed to basic and acidic residues over residues 246–276, 283–294, and 309–333; these read VEEKGSDKPEVTEKTKPAEEKSAEPEVKQET, QGEKGQIKEEST, and QQKEREEKTEGKENKEVPVQEETKS. Polar residues predominate over residues 355 to 368; the sequence is TEQSNIDESATTPA. Serine 503 is modified (phosphoserine). 2 stretches are compositionally biased toward basic and acidic residues: residues 504–521 and 532–569; these read RGHDFRNTSVRNMDDRAN and RMNDDRRSNRSYTSRRDRERGSYRNEEKREDDKPKEEV. One can recognise an MIF4G domain in the interval 607-850; it reads ERKMKSLLNK…IDIKELRHDK (244 aa). The interval 870-952 is disordered; that stretch reads EEERQRQLKN…ALMGESDDEE (83 aa). A compositionally biased stretch (low complexity) spans 879–894; the sequence is NNSRSNSRRTNNSSNR. Position 883 is a phosphoserine (serine 883). The residue at position 888 (threonine 888) is a Phosphothreonine. A phosphoserine mark is found at serine 892, serine 896, serine 908, and serine 948. A compositionally biased stretch (polar residues) spans 908–922; it reads SFITTRTYSQRNSQR.

This sequence belongs to the eukaryotic initiation factor 4G family. Component of the eIF4F complex, which composition varies with external and internal environmental conditions. It is composed of at least eIF4A (TIF1/TIF2), eIF4E (TIF45) and eIF4G (TIF4631 or TIF4632). Interacts with PAT1 in a RNA-dependent manner.

The protein resides in the cytoplasm. It is found in the P-body. Its subcellular location is the stress granule. In terms of biological role, component of the eIF4F complex, which interacts with the mRNA cap structure and serves as an initial point of assembly for the translation apparatus. Stimulates translation by interaction with polyadenylate-binding protein PAB1, bringing the 5'- and 3'-ends of the mRNA in proximity. The formation of this circular mRNP structure appears to be critical for the synergistic effects of the cap and the poly(A) tail in facilitating translation initiation, recycling of ribosomes, and mRNA stability. TIF4631 is probably essential when TIF4632 is missing. This chain is Eukaryotic initiation factor 4F subunit p150, found in Saccharomyces cerevisiae (strain ATCC 204508 / S288c) (Baker's yeast).